A 503-amino-acid polypeptide reads, in one-letter code: Long-chain-aldehyde dehydrogenase (503 aa).

218–224 (GYGAEVG) serves as a coordination point for NAD(+). Residues E262 and C301 contribute to the active site.

This sequence belongs to the aldehyde dehydrogenase family. In terms of assembly, homotetramer.

It carries out the reaction a long-chain fatty aldehyde + NAD(+) + H2O = a long-chain fatty acid + NADH + 2 H(+). Completely inhibited by p-chloromercuribenzoate and N-ethylmaleimide. Strongly inhibited by iodoacetate. Inhibited by Pb(2+), Fe(3+), Ag(+) and Hg(2+) and partially inhibited by several other metal ions Mn(2+), Zn(2+) and Cu(2+). Its function is as follows. Aldehyde dehydrogenase that shows activity toward n-alkanals (C(4) to C(14)), with a preference for longer carbon chains. The best substrate is tetradecanal. The polypeptide is Long-chain-aldehyde dehydrogenase (ald1) (Acinetobacter sp).